The following is a 1310-amino-acid chain: Clustered mitochondria protein homolog (1310 aa).

The 245-residue stretch at 375–619 folds into the Clu domain; it reads DITRSQESYL…RVTPLDVVWQ (245 aa). Over residues 662–682 the composition is skewed to basic and acidic residues; that stretch reads KAQEDAANKEQPSETTESKEG. Disordered stretches follow at residues 662-692 and 931-960; these read KAQE…EEAL and VANG…SRAV. TPR repeat units follow at residues 1033–1066, 1075–1108, and 1117–1150; these read AKLY…TERT, ILAY…WKII, and ITTM…CESL. Disordered regions lie at residues 1245 to 1266 and 1281 to 1310; these read VQPQ…ANAS and GGDA…KSSA.

This sequence belongs to the CLU family. In terms of assembly, may associate with the eukaryotic translation initiation factor 3 (eIF-3) complex.

The protein localises to the cytoplasm. Functionally, mRNA-binding protein involved in proper cytoplasmic distribution of mitochondria. The polypeptide is Clustered mitochondria protein homolog (Aspergillus fumigatus (strain CBS 144.89 / FGSC A1163 / CEA10) (Neosartorya fumigata)).